The primary structure comprises 280 residues: 2,3,4,5-tetrahydropyridine-2,6-dicarboxylate N-succinyltransferase (280 aa).

Positions 107 and 144 each coordinate substrate.

The protein belongs to the transferase hexapeptide repeat family. As to quaternary structure, homotrimer.

Its subcellular location is the cytoplasm. It carries out the reaction (S)-2,3,4,5-tetrahydrodipicolinate + succinyl-CoA + H2O = (S)-2-succinylamino-6-oxoheptanedioate + CoA. The protein operates within amino-acid biosynthesis; L-lysine biosynthesis via DAP pathway; LL-2,6-diaminopimelate from (S)-tetrahydrodipicolinate (succinylase route): step 1/3. This chain is 2,3,4,5-tetrahydropyridine-2,6-dicarboxylate N-succinyltransferase, found in Paramagnetospirillum magneticum (strain ATCC 700264 / AMB-1) (Magnetospirillum magneticum).